We begin with the raw amino-acid sequence, 207 residues long: MYNNALHGIYLTQITWMKSARAEPYLYYIVTEVEKRNLPIELALMPLIESDFNASAYSHKHASGLWQLTPAIAKYFKVQISPWYDGRQDVIDSTRAALNFMEYLHKRFDGDWYHAIAALNLGEGRVLRAISNIKNKANPLIFQLKTAQTNQSVRAKRTSCGTIIKKPKNAFPAILNSPTIAVLPVDCAVILDNRKQWQQLEIFKPMV.

Positions Asn37–Gly122 are slt-type domain. Glu49 is a catalytic residue.

This sequence belongs to the transglycosylase Slt family.

In Alteromonas sp. (strain M-1), this protein is Putative tributyltin chloride resistance protein (tbtA).